The primary structure comprises 328 residues: dITP/XTP pyrophosphatase (328 aa).

The tract at residues 1 to 129 (MSEKIYEYKD…ATSEQGFGDT (129 aa)) is unknown. The NTP pyrophosphatase stretch occupies residues 130–324 (ILIATRNEGK…KLMEVFPAWQ (195 aa)). Residue 134–139 (TRNEGK) coordinates substrate. Residue Asp-196 is the Proton acceptor of the active site. Asp-196 lines the Mg(2+) pocket. Substrate-binding positions include Ser-197, 280–283 (FGYD), Lys-303, and 308–309 (HR).

It belongs to the HAM1 NTPase family. In terms of assembly, homodimer. The cofactor is Mg(2+).

It carries out the reaction XTP + H2O = XMP + diphosphate + H(+). It catalyses the reaction dITP + H2O = dIMP + diphosphate + H(+). The catalysed reaction is ITP + H2O = IMP + diphosphate + H(+). Functionally, pyrophosphatase that catalyzes the hydrolysis of nucleoside triphosphates to their monophosphate derivatives, with a high preference for the non-canonical purine nucleotides XTP (xanthosine triphosphate), dITP (deoxyinosine triphosphate) and ITP. Seems to function as a house-cleaning enzyme that removes non-canonical purine nucleotides from the nucleotide pool, thus preventing their incorporation into DNA/RNA and avoiding chromosomal lesions. The polypeptide is dITP/XTP pyrophosphatase (Streptococcus pyogenes serotype M18 (strain MGAS8232)).